The chain runs to 123 residues: Large ribosomal subunit protein uL14 (123 aa).

The protein belongs to the universal ribosomal protein uL14 family. In terms of assembly, part of the 50S ribosomal subunit. Forms a cluster with proteins L3 and L19. In the 70S ribosome, L14 and L19 interact and together make contacts with the 16S rRNA in bridges B5 and B8.

Its function is as follows. Binds to 23S rRNA. Forms part of two intersubunit bridges in the 70S ribosome. The polypeptide is Large ribosomal subunit protein uL14 (Blochmanniella floridana).